A 212-amino-acid chain; its full sequence is tRNA (guanine-N(7)-)-methyltransferase (212 aa).

S-adenosyl-L-methionine is bound by residues Glu-44, Glu-69, Asp-96, and Asp-118. Asp-118 is an active-site residue. Residue Lys-122 coordinates substrate. The interaction with RNA stretch occupies residues 124-129 (RHEKRR). Residues Asp-154 and 192-195 (TEYE) contribute to the substrate site.

The protein belongs to the class I-like SAM-binding methyltransferase superfamily. TrmB family.

The enzyme catalyses guanosine(46) in tRNA + S-adenosyl-L-methionine = N(7)-methylguanosine(46) in tRNA + S-adenosyl-L-homocysteine. It participates in tRNA modification; N(7)-methylguanine-tRNA biosynthesis. Catalyzes the formation of N(7)-methylguanine at position 46 (m7G46) in tRNA. The sequence is that of tRNA (guanine-N(7)-)-methyltransferase from Pediococcus pentosaceus (strain ATCC 25745 / CCUG 21536 / LMG 10740 / 183-1w).